Consider the following 470-residue polypeptide: MHFSIPETESRSGDSGGSAYVAYNIHVNGVLHCRVRYSQLLGLHEQLRKEYGANVLPAFPPKKLFSLTPAEVEQRREQLEKYMQAVRQDPLLGSSETFNSFLRRAQQETQQVPTEEVSLEVLLSNGQKVLVNVLTSDQTEDVLEAVAAKLDLPDDLIGYFSLFLVREKEDGAFSFVRKLQEFELPYVSVTSLRSQEYKIVLRKSYWDSAYDDDVMENRVGLNLLYAQTVADIERGWILVTKEQHRQLKSLQEKVSKKEFLRLAQTLRHYGYLRFDACVADFPEKDCPVVVSAGNSELSLQLRLPGQQLREGSFRVTRMRCWRVTSSVPLPSGGTSSPGRGRGEVRLELAFEYLMSKDRLQWVTITSPQAIMMSICLQSMVDELMVKKSGGSIRKMLRRRVGGTLRRSDSQQAVKSPPLLESPDASRESMVKLSSKLSAVSLRGIGTPGTDASASDVHGNFAFEGIGDEDL.

The 109-residue stretch at Met1 to Thr109 folds into the PX domain. A 1,2-diacyl-sn-glycero-3-phospho-(1D-myo-inositol-3-phosphate) is bound by residues Arg36, Ser38, Lys62, and Arg75. Residues Glu115 to Trp206 form the Ras-associating domain. Residues Glu115–Leu432 form an FERM-like region. A PTB-like F3 module region spans residues Gly270–Leu432. 7 positions are modified to phosphoserine: Ser336, Ser407, Ser409, Ser415, Ser421, Ser437, and Ser440. The segment at Val400–Arg426 is disordered.

This sequence belongs to the sorting nexin family. As to quaternary structure, monomer. Interacts with APP (via cytoplasmic YXNPXY motif). Interacts with KIF1B. Interacts with the C-termini of P-selectin, PTC, LDLR, VLDLR, LRP1 and LRP8. Interacts with KRIT1 (via N-terminus). Interacts with HRAS. Interacts with ITGB1 and ITGB5 (via NPxY motif). Interacts with CCDC22 and CCDC93; the interaction associates SNX17 with the CCC complex. Interacts (via C-terminus) with VPS26C and VPS35L; the interactions are direct and associate SNX17 with the retriever complex.

It is found in the cytoplasm. Its subcellular location is the early endosome. It localises to the cytoplasmic vesicle membrane. Functionally, critical regulator of endosomal recycling of numerous surface proteins, including integrins, signaling receptor and channels. Binds to NPxY sequences in the cytoplasmic tails of target cargos. Associates with retriever and CCC complexes to prevent lysosomal degradation and promote cell surface recycling of numerous cargos such as integrins ITGB1, ITGB5 and their associated alpha subunits. Also required for maintenance of normal cell surface levels of APP and LRP1. Interacts with membranes containing phosphatidylinositol 3-phosphate (PtdIns(3P)). The chain is Sorting nexin-17 (SNX17) from Bos taurus (Bovine).